The primary structure comprises 511 residues: Mediator of RNA polymerase II transcription subunit 17 (511 aa).

The protein belongs to the Mediator complex subunit 17 family. Component of the Mediator complex.

Its subcellular location is the nucleus. In terms of biological role, component of the Mediator complex, a coactivator involved in the regulated transcription of nearly all RNA polymerase II-dependent genes. Mediator functions as a bridge to convey information from gene-specific regulatory proteins to the basal RNA polymerase II transcription machinery. Mediator is recruited to promoters by direct interactions with regulatory proteins and serves as a scaffold for the assembly of a functional preinitiation complex with RNA polymerase II and the general transcription factors. The polypeptide is Mediator of RNA polymerase II transcription subunit 17 (SRB4) (Yarrowia lipolytica (strain CLIB 122 / E 150) (Yeast)).